A 452-amino-acid polypeptide reads, in one-letter code: Bifunctional protein GlmU (452 aa).

The interval Met1–Arg226 is pyrophosphorylase. UDP-N-acetyl-alpha-D-glucosamine contacts are provided by residues Leu8 to Gly11, Lys22, Gln73, and Gly78 to Thr79. Residue Asp102 participates in Mg(2+) binding. 4 residues coordinate UDP-N-acetyl-alpha-D-glucosamine: Gly137, Glu151, Asn166, and Asn224. Residue Asn224 coordinates Mg(2+). The linker stretch occupies residues Leu227 to Asn247. An N-acetyltransferase region spans residues Gly248–Lys452. UDP-N-acetyl-alpha-D-glucosamine-binding residues include Arg330 and Lys348. His360 acts as the Proton acceptor in catalysis. Residues Tyr363 and Asn374 each coordinate UDP-N-acetyl-alpha-D-glucosamine. Acetyl-CoA contacts are provided by residues Ala377, Asn383–Tyr384, Ser402, Ala420, and Arg437.

It in the N-terminal section; belongs to the N-acetylglucosamine-1-phosphate uridyltransferase family. The protein in the C-terminal section; belongs to the transferase hexapeptide repeat family. As to quaternary structure, homotrimer. Mg(2+) is required as a cofactor.

Its subcellular location is the cytoplasm. It catalyses the reaction alpha-D-glucosamine 1-phosphate + acetyl-CoA = N-acetyl-alpha-D-glucosamine 1-phosphate + CoA + H(+). It carries out the reaction N-acetyl-alpha-D-glucosamine 1-phosphate + UTP + H(+) = UDP-N-acetyl-alpha-D-glucosamine + diphosphate. It functions in the pathway nucleotide-sugar biosynthesis; UDP-N-acetyl-alpha-D-glucosamine biosynthesis; N-acetyl-alpha-D-glucosamine 1-phosphate from alpha-D-glucosamine 6-phosphate (route II): step 2/2. Its pathway is nucleotide-sugar biosynthesis; UDP-N-acetyl-alpha-D-glucosamine biosynthesis; UDP-N-acetyl-alpha-D-glucosamine from N-acetyl-alpha-D-glucosamine 1-phosphate: step 1/1. It participates in bacterial outer membrane biogenesis; LPS lipid A biosynthesis. Catalyzes the last two sequential reactions in the de novo biosynthetic pathway for UDP-N-acetylglucosamine (UDP-GlcNAc). The C-terminal domain catalyzes the transfer of acetyl group from acetyl coenzyme A to glucosamine-1-phosphate (GlcN-1-P) to produce N-acetylglucosamine-1-phosphate (GlcNAc-1-P), which is converted into UDP-GlcNAc by the transfer of uridine 5-monophosphate (from uridine 5-triphosphate), a reaction catalyzed by the N-terminal domain. The chain is Bifunctional protein GlmU from Alteromonas mediterranea (strain DSM 17117 / CIP 110805 / LMG 28347 / Deep ecotype).